Here is a 360-residue protein sequence, read N- to C-terminus: Probable cinnamyl alcohol dehydrogenase 6 (360 aa).

A Zn(2+)-binding site is contributed by Cys48. Thr50 is a binding site for NADP(+). Zn(2+)-binding residues include His70, Glu71, Cys101, Cys104, Cys107, Cys115, and Cys164. NADP(+)-binding positions include Thr168, 192–197 (GLGGLG), 215–220 (STSPAK), Thr255, Gly279, and 302–304 (SMT).

The protein belongs to the zinc-containing alcohol dehydrogenase family. Homodimer. Zn(2+) is required as a cofactor.

It carries out the reaction (E)-cinnamyl alcohol + NADP(+) = (E)-cinnamaldehyde + NADPH + H(+). It catalyses the reaction (E)-coniferol + NADP(+) = (E)-coniferaldehyde + NADPH + H(+). The enzyme catalyses (E)-sinapyl alcohol + NADP(+) = (E)-sinapaldehyde + NADPH + H(+). The catalysed reaction is (E)-4-coumaroyl alcohol + NADP(+) = (E)-4-coumaraldehyde + NADPH + H(+). It carries out the reaction (E)-caffeyl alcohol + NADP(+) = (E)-caffeyl aldehyde + NADPH + H(+). It participates in aromatic compound metabolism; phenylpropanoid biosynthesis. Functionally, involved in lignin biosynthesis. Catalyzes the final step specific for the production of lignin monomers. Catalyzes the NADPH-dependent reduction of coniferaldehyde, 5-hydroxyconiferaldehyde, sinapaldehyde, 4-coumaraldehyde and caffeyl aldehyde to their respective alcohols. This Oryza sativa subsp. japonica (Rice) protein is Probable cinnamyl alcohol dehydrogenase 6.